Reading from the N-terminus, the 743-residue chain is Type VI secretion system spike protein VgrG1 (743 aa).

This sequence belongs to the VgrG protein family.

The protein localises to the secreted. It carries out the reaction L-arginyl-[protein] + NAD(+) = N(omega)-(ADP-D-ribosyl)-L-arginyl-[protein] + nicotinamide + H(+). Its function is as follows. Part of the type VI secretion system specialized secretion system, which delivers several virulence factors in both prokaryotic and eukaryotic cells during infection. Acts directly as an secreted effector with an actin ADP-ribosyltransferase activity that disrupts the host actin cytoskeleton, leading to a decrease in host cell viability and an increase in apoptosis. This chain is Type VI secretion system spike protein VgrG1 (vgrG1), found in Aeromonas hydrophila subsp. hydrophila (strain ATCC 7966 / DSM 30187 / BCRC 13018 / CCUG 14551 / JCM 1027 / KCTC 2358 / NCIMB 9240 / NCTC 8049).